Here is a 539-residue protein sequence, read N- to C-terminus: Phosphoenolpyruvate carboxykinase (ATP) (539 aa).

Residues Arg-61, Tyr-195, and Lys-201 each contribute to the substrate site. ATP contacts are provided by residues Lys-201, His-220, and Gly-238 to Thr-246. Residues Lys-201 and His-220 each coordinate Mn(2+). Residue Asp-259 coordinates Mn(2+). Glu-287, Arg-325, and Thr-450 together coordinate ATP. Arg-325 lines the substrate pocket.

Belongs to the phosphoenolpyruvate carboxykinase (ATP) family. Requires Mn(2+) as cofactor.

The protein localises to the cytoplasm. The enzyme catalyses oxaloacetate + ATP = phosphoenolpyruvate + ADP + CO2. It functions in the pathway carbohydrate biosynthesis; gluconeogenesis. Involved in the gluconeogenesis. Catalyzes the conversion of oxaloacetate (OAA) to phosphoenolpyruvate (PEP) through direct phosphoryl transfer between the nucleoside triphosphate and OAA. The chain is Phosphoenolpyruvate carboxykinase (ATP) from Methylorubrum extorquens (strain CM4 / NCIMB 13688) (Methylobacterium extorquens).